A 108-amino-acid polypeptide reads, in one-letter code: E3 ubiquitin-protein ligase Midline-1 (108 aa).

The 100-residue stretch at 1–100 folds into the B30.2/SPRY domain; that stretch reads KSAPKHEWIG…IITGLPIPDH (100 aa).

The protein belongs to the TRIM/RBCC family. Homodimer or heterodimer with MID2. Interacts with IGBP1.

The protein localises to the cytoplasm. It is found in the cytoskeleton. The enzyme catalyses S-ubiquitinyl-[E2 ubiquitin-conjugating enzyme]-L-cysteine + [acceptor protein]-L-lysine = [E2 ubiquitin-conjugating enzyme]-L-cysteine + N(6)-ubiquitinyl-[acceptor protein]-L-lysine.. Its function is as follows. Has E3 ubiquitin ligase activity towards IGBP1, promoting its monoubiquitination, which results in deprotection of the catalytic subunit of protein phosphatase PP2A, and its subsequent degradation by polyubiquitination. This is E3 ubiquitin-protein ligase Midline-1 (Mid1) from Mus caroli (Ryukyu mouse).